The sequence spans 98 residues: Large ribosomal subunit protein uL23 (98 aa).

Belongs to the universal ribosomal protein uL23 family. In terms of assembly, part of the 50S ribosomal subunit. Contacts protein L29, and trigger factor when it is bound to the ribosome.

In terms of biological role, one of the early assembly proteins it binds 23S rRNA. One of the proteins that surrounds the polypeptide exit tunnel on the outside of the ribosome. Forms the main docking site for trigger factor binding to the ribosome. This Gluconacetobacter diazotrophicus (strain ATCC 49037 / DSM 5601 / CCUG 37298 / CIP 103539 / LMG 7603 / PAl5) protein is Large ribosomal subunit protein uL23.